Consider the following 347-residue polypeptide: Dihydroorotase (347 aa).

Positions 14 and 16 each coordinate Zn(2+). Substrate-binding positions include 16–18 (HLR) and N42. Residues K100, H137, and H175 each coordinate Zn(2+). K100 carries the post-translational modification N6-carboxylysine. Residue H137 participates in substrate binding. A substrate-binding site is contributed by L220. D248 contacts Zn(2+). Residue D248 is part of the active site. Positions 252 and 264 each coordinate substrate.

The protein belongs to the metallo-dependent hydrolases superfamily. DHOase family. Class II DHOase subfamily. As to quaternary structure, homodimer. Zn(2+) is required as a cofactor.

It carries out the reaction (S)-dihydroorotate + H2O = N-carbamoyl-L-aspartate + H(+). The protein operates within pyrimidine metabolism; UMP biosynthesis via de novo pathway; (S)-dihydroorotate from bicarbonate: step 3/3. In terms of biological role, catalyzes the reversible cyclization of carbamoyl aspartate to dihydroorotate. The protein is Dihydroorotase of Pseudomonas syringae pv. tomato (strain ATCC BAA-871 / DC3000).